We begin with the raw amino-acid sequence, 268 residues long: MRITVYSNDGSSSRQVADKLTNKLINNGFTMDAQTPEVVISVGGDGTLLSAFHRYADALDQIRFIGVHTGHLGFYTDWRDFEVDDLVVALQEDLGQSISYPLLEVKITYADTNEVQHFLALNEVTLRRYAATLRTDVYIKENFFESFRGDGLCVSTPTGSTAYGKSIGGAVLHPRLEAMQLTEIASINNRVYRTLAAPIVLPSDEWLLLKPSRTSDYVVTIDQFTFKDRPIESMQFKIAKERIQFARYRHTHFWDRVEDAFIGSKHEI.

Asp-45 serves as the catalytic Proton acceptor. NAD(+) is bound by residues 45 to 46, 122 to 123, Arg-148, Asp-150, 161 to 166, Ala-185, and Gln-223; these read DG, NE, and TAYGKS.

It belongs to the NAD kinase family. It depends on a divalent metal cation as a cofactor.

The protein localises to the cytoplasm. It catalyses the reaction NAD(+) + ATP = ADP + NADP(+) + H(+). Functionally, involved in the regulation of the intracellular balance of NAD and NADP, and is a key enzyme in the biosynthesis of NADP. Catalyzes specifically the phosphorylation on 2'-hydroxyl of the adenosine moiety of NAD to yield NADP. In Latilactobacillus sakei subsp. sakei (strain 23K) (Lactobacillus sakei subsp. sakei), this protein is NAD kinase.